The sequence spans 334 residues: Fructose-1,6-bisphosphatase class 1 (334 aa).

Residues Glu89, Asp112, Leu114, and Asp115 each contribute to the Mg(2+) site. Residues Asp115 to Ser118, Asn208, Tyr241, Tyr259 to Tyr261, and Lys271 each bind substrate. Glu277 contributes to the Mg(2+) binding site.

Belongs to the FBPase class 1 family. As to quaternary structure, homotetramer. It depends on Mg(2+) as a cofactor.

The protein resides in the cytoplasm. The catalysed reaction is beta-D-fructose 1,6-bisphosphate + H2O = beta-D-fructose 6-phosphate + phosphate. It participates in carbohydrate biosynthesis; gluconeogenesis. This Pectobacterium atrosepticum (strain SCRI 1043 / ATCC BAA-672) (Erwinia carotovora subsp. atroseptica) protein is Fructose-1,6-bisphosphatase class 1.